Consider the following 416-residue polypeptide: S-layer protein B (416 aa).

A signal peptide spans 1–20 (MKYNLLPLILLSLLVAPLLA). The stretch at 310–330 (IASLNSTIQSLESQISSLSST) forms a coiled coil. The helical transmembrane segment at 392-412 (IALAVSIIAIIISIVVLILVF) threads the bilayer.

It belongs to the Sulfolobales SlaB family. The mushroom-shaped unit cells of the Sulfolobales' S-layers may consist of three SlaB subunits and six SlaA subunits.

It localises to the secreted. The protein resides in the cell wall. It is found in the S-layer. Its subcellular location is the cell membrane. Its function is as follows. S-layer small protein. May anchor the complex to the cell membrane. In Metallosphaera sedula (strain ATCC 51363 / DSM 5348 / JCM 9185 / NBRC 15509 / TH2), this protein is S-layer protein B.